Consider the following 186-residue polypeptide: MPKAPAKKAEPAPAPAPAPEPAPAPAAPAVDLSAVKVEFSADQIEDYREAFGLFDRVGDNKVAYNQIADIMRALGQNPTNKEVSKLLGNPSADDMTNKRVEFEAFLPMLQTIINSPNKAGFEDYVEGLRVFDKEGNGTVMGAELRIVLSTLGEKMTEAEIDALMAGQEDENGVVNYEAFVKHIMSV.

Met1 bears the Blocked amino end (Met) mark. Residues 1–26 (MPKAPAKKAEPAPAPAPAPEPAPAPA) are disordered. Residues 12–26 (APAPAPAPEPAPAPA) show a composition bias toward pro residues. EF-hand domains lie at 42 to 77 (DQIEDYREAFGLFDRVGDNKVAYNQIADIMRALGQN) and 119 to 154 (AGFEDYVEGLRVFDKEGNGTVMGAELRIVLSTLGEK).

In terms of assembly, myosin is a hexamer of 2 heavy chains and 4 light chains.

The sequence is that of Myosin light chain 1, skeletal muscle isoform from Chelon ramada (Thin-lipped grey mullet).